Consider the following 167-residue polypeptide: Endoribonuclease YbeY (167 aa).

The Zn(2+) site is built by histidine 132, histidine 136, and histidine 142.

This sequence belongs to the endoribonuclease YbeY family. The cofactor is Zn(2+).

It is found in the cytoplasm. Its function is as follows. Single strand-specific metallo-endoribonuclease involved in late-stage 70S ribosome quality control and in maturation of the 3' terminus of the 16S rRNA. The protein is Endoribonuclease YbeY of Clostridium tetani (strain Massachusetts / E88).